The following is a 332-amino-acid chain: Glycerol-3-phosphate dehydrogenase [NAD(P)+] (332 aa).

The NADPH site is built by S15, W16, and K110. Sn-glycerol 3-phosphate-binding residues include K110, G137, and S139. A141 lines the NADPH pocket. Residues K192, D245, S255, R256, and N257 each coordinate sn-glycerol 3-phosphate. K192 (proton acceptor) is an active-site residue. R256 lines the NADPH pocket. E282 contributes to the NADPH binding site.

The protein belongs to the NAD-dependent glycerol-3-phosphate dehydrogenase family.

It is found in the cytoplasm. It catalyses the reaction sn-glycerol 3-phosphate + NAD(+) = dihydroxyacetone phosphate + NADH + H(+). It carries out the reaction sn-glycerol 3-phosphate + NADP(+) = dihydroxyacetone phosphate + NADPH + H(+). It participates in membrane lipid metabolism; glycerophospholipid metabolism. In terms of biological role, catalyzes the reduction of the glycolytic intermediate dihydroxyacetone phosphate (DHAP) to sn-glycerol 3-phosphate (G3P), the key precursor for phospholipid synthesis. This is Glycerol-3-phosphate dehydrogenase [NAD(P)+] from Coxiella burnetii (strain CbuG_Q212) (Coxiella burnetii (strain Q212)).